We begin with the raw amino-acid sequence, 235 residues long: Orotidine 5'-phosphate decarboxylase (235 aa).

Substrate-binding positions include Asp-12, Lys-34, 61-70 (DMKLLDIDNT), Thr-116, Arg-177, Gln-186, and Arg-207. The Proton donor role is filled by Lys-63.

The protein belongs to the OMP decarboxylase family. Type 1 subfamily. Homodimer.

It carries out the reaction orotidine 5'-phosphate + H(+) = UMP + CO2. It functions in the pathway pyrimidine metabolism; UMP biosynthesis via de novo pathway; UMP from orotate: step 2/2. In terms of biological role, catalyzes the decarboxylation of orotidine 5'-monophosphate (OMP) to uridine 5'-monophosphate (UMP). The chain is Orotidine 5'-phosphate decarboxylase from Rhizobium etli (strain CIAT 652).